Reading from the N-terminus, the 371-residue chain is Neuropeptide Y receptor type 6 (371 aa).

Over 1–31 the chain is Extracellular; the sequence is MEVLTNQPTPNKTSGKSNNSAFFYFESCQPP. Asn-11 and Asn-18 each carry an N-linked (GlcNAc...) asparagine glycan. A helical membrane pass occupies residues 32-52; that stretch reads FLAILLLLIAYTVILIMGIFG. Residues 53 to 82 lie on the Cytoplasmic side of the membrane; the sequence is NLSLIIIIFKKQREAQNVTNILIANLSLSD. A helical transmembrane segment spans residues 83–103; that stretch reads ILVCVMCIPFTVIYTLMDHWV. At 104-111 the chain is on the extracellular side; sequence FGNTMCKL. A disulfide bridge links Cys-109 with Cys-196. The helical transmembrane segment at 112–132 threads the bilayer; it reads TSYVQSVSVSVSIFSLVLIAI. Topologically, residues 133–150 are cytoplasmic; it reads ERYQLIVNPRGWKPRVAH. The chain crosses the membrane as a helical span at residues 151–171; that stretch reads AYWGIILIWLISLTLSIPLFL. At 172 to 206 the chain is on the extracellular side; that stretch reads SYHLTNEPFHNLSLPTDIYTHQVACVEIWPSKLNQ. The N-linked (GlcNAc...) asparagine glycan is linked to Asn-182. Residues 207-227 traverse the membrane as a helical segment; the sequence is LLFSTSLFMLQYFVPLGFILI. Residues 228 to 263 are Cytoplasmic-facing; it reads CYLKIVLCLRKRTRQVDRRKENKSRLNENKRVNVML. A helical transmembrane segment spans residues 264–284; it reads ISIVVTFGACWLPLNIFNVIF. The Extracellular segment spans residues 285–297; the sequence is DWYHEMLMSCHHD. The helical transmembrane segment at 298–318 threads the bilayer; that stretch reads LVFVVCHLIAMVSTCINPLFY. At 319 to 371 the chain is on the cytoplasmic side; it reads GFLNKNFQKDLMMLIHHCWCGEPQESYENIAMSTMHTDESKGSLKLAHIPTGI. Cys-336 carries S-palmitoyl cysteine lipidation.

Belongs to the G-protein coupled receptor 1 family. As to expression, kidney and discrete regions of the hypothalamus including the suprachiasmatic nucleus, anterior hypothalamus, bed nucleus stria terminalis, and the ventromedial nucleus.

Its subcellular location is the cell membrane. In terms of biological role, receptor for neuropeptide Y and peptide YY. The rank order of affinity of this receptor for pancreatic polypeptides is NPY = PYY &gt;= NPY (2-36) = [Leu-31, Pro-34] NPY &gt; NPY (13-36) &gt; PP. The activity of this receptor is mediated by G proteins that inhibits adenylate cyclase activity. In Mus musculus (Mouse), this protein is Neuropeptide Y receptor type 6 (Npy6r).